The sequence spans 168 residues: MSLLFMISVGFSLSSLSMMVIQPLSLGLMLMLMVLCVSGLTSLIIFSWYGYLLFLVYVGGMLVMFMYVISLIPNLIFLSNKVFAYFFFIFFGFMMMNFFVMKELVSVEVKSMSLFDYGYMSMGGSGIIMLYDNFFCYVLLAVILLFVLISVVKICYYCEGPLRVFKFK.

A run of 5 helical transmembrane segments spans residues 26 to 46, 52 to 72, 82 to 102, 111 to 131, and 134 to 154; these read LGLM…LIIF, LLFL…ISLI, VFAY…FVMK, SMSL…IMLY, and FFCY…VVKI.

The protein belongs to the complex I subunit 6 family.

It is found in the mitochondrion membrane. It catalyses the reaction a ubiquinone + NADH + 5 H(+)(in) = a ubiquinol + NAD(+) + 4 H(+)(out). Functionally, core subunit of the mitochondrial membrane respiratory chain NADH dehydrogenase (Complex I) that is believed to belong to the minimal assembly required for catalysis. Complex I functions in the transfer of electrons from NADH to the respiratory chain. The immediate electron acceptor for the enzyme is believed to be ubiquinone. In Heterololigo bleekeri (Spear squid), this protein is NADH-ubiquinone oxidoreductase chain 6 (ND6).